Reading from the N-terminus, the 336-residue chain is Phosphoribosylformylglycinamidine cyclo-ligase (336 aa).

Belongs to the AIR synthase family.

It is found in the cytoplasm. It carries out the reaction 2-formamido-N(1)-(5-O-phospho-beta-D-ribosyl)acetamidine + ATP = 5-amino-1-(5-phospho-beta-D-ribosyl)imidazole + ADP + phosphate + H(+). Its pathway is purine metabolism; IMP biosynthesis via de novo pathway; 5-amino-1-(5-phospho-D-ribosyl)imidazole from N(2)-formyl-N(1)-(5-phospho-D-ribosyl)glycinamide: step 2/2. This chain is Phosphoribosylformylglycinamidine cyclo-ligase, found in Thermoanaerobacter sp. (strain X514).